A 225-amino-acid polypeptide reads, in one-letter code: RNA chaperone ProQ (225 aa).

Residues 103–173 are disordered; the sequence is LEEAKARVQT…APREERHTPV (71 aa). The segment covering 109–118 has biased composition (low complexity); it reads RVQTQRAAQQ. Residues 137-146 are compositionally biased toward basic residues; sequence RERKPRPQQP. The segment covering 147-156 has biased composition (basic and acidic residues); the sequence is RRKEGAEQRK.

Belongs to the ProQ family.

It localises to the cytoplasm. In terms of biological role, RNA chaperone with significant RNA binding, RNA strand exchange and RNA duplexing activities. May regulate ProP activity through an RNA-based, post-transcriptional mechanism. The chain is RNA chaperone ProQ from Klebsiella pneumoniae (strain 342).